We begin with the raw amino-acid sequence, 556 residues long: Urocanate hydratase (556 aa).

NAD(+)-binding positions include 52–53 (GG), Gln-130, 176–178 (GMG), Glu-196, Arg-201, 242–243 (NA), 263–267 (QTSAH), 273–274 (YL), and Tyr-322. The active site involves Cys-410. NAD(+) is bound at residue Gly-492.

Belongs to the urocanase family. It depends on NAD(+) as a cofactor.

The protein resides in the cytoplasm. The catalysed reaction is 4-imidazolone-5-propanoate = trans-urocanate + H2O. It functions in the pathway amino-acid degradation; L-histidine degradation into L-glutamate; N-formimidoyl-L-glutamate from L-histidine: step 2/3. In terms of biological role, catalyzes the conversion of urocanate to 4-imidazolone-5-propionate. This Shewanella frigidimarina (strain NCIMB 400) protein is Urocanate hydratase.